Consider the following 260-residue polypeptide: Small ribosomal subunit protein uS2 (260 aa).

The protein belongs to the universal ribosomal protein uS2 family.

The sequence is that of Small ribosomal subunit protein uS2 from Gluconacetobacter diazotrophicus (strain ATCC 49037 / DSM 5601 / CCUG 37298 / CIP 103539 / LMG 7603 / PAl5).